Here is a 469-residue protein sequence, read N- to C-terminus: Nuclear hormone receptor family member nhr-154 (469 aa).

Residues 80-159 (PSKCLVCRNP…VGMNPMAIQA (80 aa)) constitute a DNA-binding region (nuclear receptor). 2 NR C4-type zinc fingers span residues 83–103 (CLVCRNPAIGYHYDVPSCNGC) and 119–142 (CAKQKKCMDGTEPVDMSKRLCRAC). The NR LBD domain occupies 230 to 459 (LDSKPVLVVT…KMGTTFRKCI (230 aa)).

Belongs to the nuclear hormone receptor family.

The protein localises to the nucleus. Functionally, orphan nuclear receptor. This chain is Nuclear hormone receptor family member nhr-154 (nhr-154), found in Caenorhabditis elegans.